Here is a 252-residue protein sequence, read N- to C-terminus: Small ribosomal subunit protein uS2 (252 aa).

This sequence belongs to the universal ribosomal protein uS2 family. In terms of assembly, component of the small ribosomal subunit. Mature ribosomes consist of a small (40S) and a large (60S) subunit. The 40S subunit contains about 33 different proteins and 1 molecule of RNA (18S). The 60S subunit contains about 49 different proteins and 3 molecules of RNA (25S, 5.8S and 5S). Interacts with RPS21.

The protein localises to the cytoplasm. Functionally, required for the assembly and/or stability of the 40S ribosomal subunit. Required for the processing of the 20S rRNA-precursor to mature 18S rRNA in a late step of the maturation of 40S ribosomal subunits. The protein is Small ribosomal subunit protein uS2 of Encephalitozoon cuniculi (strain GB-M1) (Microsporidian parasite).